The sequence spans 253 residues: Coenzyme F420:L-glutamate ligase (253 aa).

GTP is bound by residues L9–I12, S38–T39, and K43. Residue D113 participates in a divalent metal cation binding. N116 lines the GTP pocket. A divalent metal cation-binding residues include D148, T149, and E206. A204–T211 contacts GTP.

The protein belongs to the CofE family. As to quaternary structure, homodimer. The cofactor is Mg(2+). Requires Mn(2+) as cofactor. It depends on K(+) as a cofactor.

The catalysed reaction is oxidized coenzyme F420-0 + GTP + L-glutamate = oxidized coenzyme F420-1 + GDP + phosphate + H(+). It carries out the reaction oxidized coenzyme F420-1 + GTP + L-glutamate = oxidized coenzyme F420-2 + GDP + phosphate + H(+). It functions in the pathway cofactor biosynthesis; coenzyme F420 biosynthesis. Catalyzes the GTP-dependent successive addition of two or more gamma-linked L-glutamates to the L-lactyl phosphodiester of 7,8-didemethyl-8-hydroxy-5-deazariboflavin (F420-0) to form coenzyme F420-0-glutamyl-glutamate (F420-2) or polyglutamated F420 derivatives. This chain is Coenzyme F420:L-glutamate ligase, found in Natronomonas pharaonis (strain ATCC 35678 / DSM 2160 / CIP 103997 / JCM 8858 / NBRC 14720 / NCIMB 2260 / Gabara) (Halobacterium pharaonis).